Consider the following 1168-residue polypeptide: MLEGRILAVSSQTKAVSGIPGAPKRVSFAKIREPLEVPGLLDLQTDSFEWLIGAQSWRERAAARGDSAISGGLEDILAELSPIEDFSGSMSLSFSDPRFDEVKASTDECKDKDMTYAAPLFVTAEFINNNTGEIKSQTVFMGDFPMMTDKGTFIINGTERVVVSQLVRSPGVYFDHSVDKGTEKDLHSVKVIPGRGAWLEFDVDKRDTVGVRIDRKRRQPVTVLLKALGWTTEQIAERFGFSEILMATLEKDNTAGTDEALLDIYRKLRPGEPPTKESAQTLLENLFFKDKRYDLARVGRYKINKKLGLNTGQPIVASTLTEEDIVATIEYLVRLHAGDTEMTAPGGVAVPVEVDDIDHFGNRRLRTVGELIQNQIRVGLSRMERVVRERMTTQDVEAITPQTLINIRPVVAAIKEFFGTSQLSQFMDQNNPLSGLTHKRRLSALGPGGLSRERAGLEVRDVHPSHYGRMCPIETPEGPNIGLIGSLSVYARVNPFGFIETPYRKVEGGQVTDQVDYLTADEEDRHVVAQANSAVDANGHFTDDRILVRRKGGEVEFVSSAEIDYMDVSPRQMVSVATAMIPFLEHDDANRALMGANMQRQAVPLVRSEAPLVGTGMELRAAVDAGDVIVTEKTGVVEEVSADYVTVMADDGSRKTYRMRKFARSNQGTCANQRPIVDEGQRVESGQVLADGPCTENGEMALGKNLLVAIMPWEGHNYEDAIILSQRLVEEDVLTSIHIEEHEIDARDTKLGAEEITRDIPNVSDEVLADLDERGIIRIGAEVRDGDVLVGKVTPKGETELTPEERLLRAIFGEKAREVRDTSLKVPHGETGKVIGIRVFSRDDDDDLPPGVNELVRVYVAQKRKIQDGDKLAGRHGNKGVIGKILPQEDMPFLPDGTPIDIILNTHGVPRRMNIGQILETHLGWIGKTGWNVQIAGDGSRPDWAEQLPEEMLSAPSDSNIATPVFDGAKEDELTGLLGSTLPNRDGEVMVASDGKATLFDGRSGEPFPYPVSVGYMYIIKLHHLVDDKIHARSTGPYSMITQQPLGGKAQFGGQRFGEMECWAMQAYGAAYTLQELLTIKSDDVVGRVKVYEAIVKGENIPEPGIPESFKVLLKELQSLCLNVEVLSSDGAAIAMADGDDEDLERAAANLGINLSRNEAATVDDLAN.

This sequence belongs to the RNA polymerase beta chain family. In terms of assembly, the RNAP catalytic core consists of 2 alpha, 1 beta, 1 beta' and 1 omega subunit. When a sigma factor is associated with the core the holoenzyme is formed, which can initiate transcription.

It carries out the reaction RNA(n) + a ribonucleoside 5'-triphosphate = RNA(n+1) + diphosphate. Its function is as follows. DNA-dependent RNA polymerase catalyzes the transcription of DNA into RNA using the four ribonucleoside triphosphates as substrates. The polypeptide is DNA-directed RNA polymerase subunit beta (Rhodococcus opacus (strain B4)).